The sequence spans 27 residues: U18-ctenitoxin-Co1a (27 aa).

It belongs to the u18-CNTX family. Expressed by the venom gland.

The protein localises to the secreted. Not toxic to mice by intracerebroventricular injection. The sequence is that of U18-ctenitoxin-Co1a from Ctenus ornatus (Brazilian spider).